The following is a 416-amino-acid chain: RNA-editing ligase 2, mitochondrial (416 aa).

The transit peptide at 1–17 (MLRRLGVRHFRRTPLLF) directs the protein to the mitochondrion. ATP is bound by residues 29 to 31 (TEI), 56 to 62 (EKVHGAN), Arg79, Glu126, Phe173, and 269 to 271 (KFK). Residue Lys57 is the N6-AMP-lysine intermediate of the active site.

Belongs to the RNA ligase 2 family. Component of the RNA editing complex, a 1600 kDa complex composed of at least 20 proteins.

It is found in the mitochondrion. It catalyses the reaction ATP + (ribonucleotide)n-3'-hydroxyl + 5'-phospho-(ribonucleotide)m = (ribonucleotide)n+m + AMP + diphosphate.. Its function is as follows. RNA editing in kinetoplastid mitochondria inserts and deletes uridylates at multiple sites in pre-mRNAs as directed by guide RNAs. This is RNA-editing ligase 2, mitochondrial (REL2) from Trypanosoma brucei brucei (strain 927/4 GUTat10.1).